Reading from the N-terminus, the 268-residue chain is uncharacterized protein (268 aa).

To M.tuberculosis Rv0025 and Rv0026.

This is an uncharacterized protein from Mycobacterium tuberculosis (strain CDC 1551 / Oshkosh).